Consider the following 156-residue polypeptide: 6,7-dimethyl-8-ribityllumazine synthase (156 aa).

Residues Phe24, 58–60 (AFE), and 82–84 (VII) each bind 5-amino-6-(D-ribitylamino)uracil. 87 to 88 (ST) contributes to the (2S)-2-hydroxy-3-oxobutyl phosphate binding site. His90 (proton donor) is an active-site residue. Phe115 is a 5-amino-6-(D-ribitylamino)uracil binding site. Arg129 is a binding site for (2S)-2-hydroxy-3-oxobutyl phosphate.

It belongs to the DMRL synthase family.

It catalyses the reaction (2S)-2-hydroxy-3-oxobutyl phosphate + 5-amino-6-(D-ribitylamino)uracil = 6,7-dimethyl-8-(1-D-ribityl)lumazine + phosphate + 2 H2O + H(+). It functions in the pathway cofactor biosynthesis; riboflavin biosynthesis; riboflavin from 2-hydroxy-3-oxobutyl phosphate and 5-amino-6-(D-ribitylamino)uracil: step 1/2. Its function is as follows. Catalyzes the formation of 6,7-dimethyl-8-ribityllumazine by condensation of 5-amino-6-(D-ribitylamino)uracil with 3,4-dihydroxy-2-butanone 4-phosphate. This is the penultimate step in the biosynthesis of riboflavin. The protein is 6,7-dimethyl-8-ribityllumazine synthase of Chlorobaculum parvum (strain DSM 263 / NCIMB 8327) (Chlorobium vibrioforme subsp. thiosulfatophilum).